Reading from the N-terminus, the 94-residue chain is Alpha-conotoxin Ms20.3 (94 aa).

A signal peptide spans 1-24 (MPKLAVVLLVLLILPLSYFDAAGG). Positions 25–45 (QVVQGDRRGNGLARYLQRGDR) are excised as a propeptide. At E49 the chain carries 4-carboxyglutamate. P55 carries the post-translational modification 4-hydroxyproline. 4 disulfide bridges follow: C63/C72, C68/C80, C73/C90, and C78/C92.

The protein belongs to the conotoxin D superfamily. In terms of assembly, hetero-, homo- or pseudo-homodimer (identical sequence, different post-translational modifications). Homodimer of [carboxyGlu-49, hydroxyPro-55]Ms20.3, and heterodimer of [carboxyGlu-49, hydroxyPro-55]Ms20.3 and [carboxy'Glu-50', hydroxy'Pro-56']Ms20.5 may exist. In terms of tissue distribution, expressed by the venom duct.

The protein localises to the secreted. In terms of biological role, alpha-D-conopeptides act on postsynaptic membranes, they bind to the nicotinic acetylcholine receptors (nAChR) and thus inhibit them. Through its two C-terminal domains, this homodimeric protein would bind to two nAChR allosteric sites, located outside the nAChR C-loop of the principal binding face and at the adjacent binding interface in a clockwise direction. This toxin specifically blocks mammalian neuronal nAChR of the alpha-7/CHRNA7 (IC(50)=0.12 nM), alpha-3-beta-2/CHRNA3-CHRNB2 (IC(50)=1.08 nM), and alpha-4-beta-2/CHRNA4-CHRNB2 (IC(50)=4.5 nM) subtypes. Has no effect on alpha-3-beta-4/CHRNA3-CHRNB4, alpha-4-beta-4/CHRNA4-CHRNB4 and alpha-1-beta-1-epsilon-delta/CHRNA1-CHRNB1-CHRNE-CHRND subtypes of nAChRs. The polypeptide is Alpha-conotoxin Ms20.3 (Conus mustelinus (Weasel cone)).